Consider the following 80-residue polypeptide: UPF0291 protein LCA_1274 (80 aa).

Residues 59–80 form a disordered region; it reads EGKEVTPEKVKDIQREKGLRDD.

Belongs to the UPF0291 family.

It is found in the cytoplasm. The chain is UPF0291 protein LCA_1274 from Latilactobacillus sakei subsp. sakei (strain 23K) (Lactobacillus sakei subsp. sakei).